Here is an 89-residue protein sequence, read N- to C-terminus: Calsenilin isoform 4 (89 aa).

Residues 27-57 (SSRDAEDQGSREGIGWQPPGRSWAHTTEQEG) are disordered.

As to expression, isoform 1 or isoform 4 (T+ forms) are expressed at equal levels with isoform 2 or isoform 3 (T- forms) in brain.

Its function is as follows. Unknown for isoform 4. Csen is involved in calcium-dependent transcriptional repression, regulation of potassium channels, and perhaps in processing of PSEN2 and apoptosis. This chain is Calsenilin isoform 4 (Kcnip3), found in Mus musculus (Mouse).